We begin with the raw amino-acid sequence, 947 residues long: Bifunctional glutamine synthetase adenylyltransferase/adenylyl-removing enzyme (947 aa).

The segment at 1–443 (MQLPSSLVSV…VFETLIGDDE (443 aa)) is adenylyl removase. Residues 451–947 (ARHFHELWDM…VKQAWNQWFA (497 aa)) form an adenylyl transferase region.

This sequence belongs to the GlnE family. Mg(2+) is required as a cofactor.

The enzyme catalyses [glutamine synthetase]-O(4)-(5'-adenylyl)-L-tyrosine + phosphate = [glutamine synthetase]-L-tyrosine + ADP. It carries out the reaction [glutamine synthetase]-L-tyrosine + ATP = [glutamine synthetase]-O(4)-(5'-adenylyl)-L-tyrosine + diphosphate. Involved in the regulation of glutamine synthetase GlnA, a key enzyme in the process to assimilate ammonia. When cellular nitrogen levels are high, the C-terminal adenylyl transferase (AT) inactivates GlnA by covalent transfer of an adenylyl group from ATP to specific tyrosine residue of GlnA, thus reducing its activity. Conversely, when nitrogen levels are low, the N-terminal adenylyl removase (AR) activates GlnA by removing the adenylyl group by phosphorolysis, increasing its activity. The regulatory region of GlnE binds the signal transduction protein PII (GlnB) which indicates the nitrogen status of the cell. This chain is Bifunctional glutamine synthetase adenylyltransferase/adenylyl-removing enzyme, found in Vibrio parahaemolyticus serotype O3:K6 (strain RIMD 2210633).